Reading from the N-terminus, the 98-residue chain is NADH-ubiquinone oxidoreductase chain 4L (98 aa).

3 helical membrane passes run 1 to 21 (MSPI…GMLV), 26 to 46 (LMAS…TIAL), and 61 to 81 (ITLL…LVSI).

This sequence belongs to the complex I subunit 4L family. Core subunit of respiratory chain NADH dehydrogenase (Complex I) which is composed of 45 different subunits.

It localises to the mitochondrion inner membrane. The enzyme catalyses a ubiquinone + NADH + 5 H(+)(in) = a ubiquinol + NAD(+) + 4 H(+)(out). In terms of biological role, core subunit of the mitochondrial membrane respiratory chain NADH dehydrogenase (Complex I) which catalyzes electron transfer from NADH through the respiratory chain, using ubiquinone as an electron acceptor. Part of the enzyme membrane arm which is embedded in the lipid bilayer and involved in proton translocation. In Chlorocebus aethiops (Green monkey), this protein is NADH-ubiquinone oxidoreductase chain 4L (MT-ND4L).